We begin with the raw amino-acid sequence, 72 residues long: MRLVVCLVFLASFALVCQGEAYRGGYTGPIPRPPPIGRPPLRPVCNACYRLSVSDARNCCIKFGSCCHLVKG.

An N-terminal signal peptide occupies residues 1 to 21; it reads MRLVVCLVFLASFALVCQGEA. 3 disulfide bridges follow: C45/C59, C48/C66, and C60/C67. A Lysine amide modification is found at K71.

Belongs to the penaeidin family.

It is found in the cytoplasmic granule. In terms of biological role, antibacterial and antifungal activity. Presents chitin-binding activity. This is Penaeidin-2b from Penaeus vannamei (Whiteleg shrimp).